A 556-amino-acid chain; its full sequence is CDP-diacylglycerol--glycerol-3-phosphate 3-phosphatidyltransferase, mitochondrial (556 aa).

Residues 1–28 (MAVAAAAAAGPVFWRRLLGLLPGRPGLA) constitute a mitochondrion transit peptide. S49 carries the post-translational modification Phosphoserine. 124 to 131 (ASLYLGTG) is a binding site for ATP. PLD phosphodiesterase domains follow at residues 215–241 (TIGLQHIKVYLFDNSVILSGANLSDSY) and 460–493 (RGWTFHAKGLWLYLAGSSLPCLTLIGSPNFGYRS). Residues H220, K222, and D227 contribute to the active site.

Belongs to the CDP-alcohol phosphatidyltransferase class-II family.

It localises to the mitochondrion. It carries out the reaction a CDP-1,2-diacyl-sn-glycerol + sn-glycerol 3-phosphate = a 1,2-diacyl-sn-glycero-3-phospho-(1'-sn-glycero-3'-phosphate) + CMP + H(+). Its pathway is phospholipid metabolism; phosphatidylglycerol biosynthesis; phosphatidylglycerol from CDP-diacylglycerol: step 1/2. With respect to regulation, activated by calcium and magnesium and inhibited by other bivalent cations. Its function is as follows. Functions in the biosynthesis of the anionic phospholipids phosphatidylglycerol and cardiolipin. The polypeptide is CDP-diacylglycerol--glycerol-3-phosphate 3-phosphatidyltransferase, mitochondrial (PGS1) (Pongo abelii (Sumatran orangutan)).